Consider the following 340-residue polypeptide: MKALVKREAAKGIWLEEVPVPTPGPNEVLIKLEKTAICGTDLHIYLWDEWSQRTIKPGLTIGHEFVGRVAALGSAVTGYEIGQRVSAEGHIVCGHCRNCRGGRPHLCPNTVGIGVNVNGAFAEYMVMPASNLWPIPDQIPSELAAFFDPYGNAAHCALEFNVIGEDVLITGAGPIGIIAAGICKHIGARNVVVTDVNDFRLKLAADMGATRVVNVANQSLKDVMKELHMEGFDVGLEMSGNPRAFNDMLDCMYHGGKIAMLGIMPKGAGCDWDKIIFKGLTVQGIYGRKMYETWYKMTQLVLSGFPLGKVMTHQLPIDDFQKGFDLMEEGKAGKVVLSWN.

A Zn(2+)-binding site is contributed by Cys-38. Residues Thr-40 and His-43 each act as charge relay system in the active site. Positions 63, 64, 93, 96, 99, and 107 each coordinate Zn(2+). Residues Ile-175, Asp-195, Arg-200, 261–263 (LGI), and 285–286 (IY) contribute to the NAD(+) site.

The protein belongs to the zinc-containing alcohol dehydrogenase family. Homotetramer. It depends on Zn(2+) as a cofactor.

The protein localises to the cytoplasm. It carries out the reaction L-threonine + NAD(+) = (2S)-2-amino-3-oxobutanoate + NADH + H(+). It functions in the pathway amino-acid degradation; L-threonine degradation via oxydo-reductase pathway; glycine from L-threonine: step 1/2. Functionally, catalyzes the NAD(+)-dependent oxidation of L-threonine to 2-amino-3-ketobutyrate. This is L-threonine 3-dehydrogenase from Stenotrophomonas maltophilia (strain K279a).